Here is a 638-residue protein sequence, read N- to C-terminus: Chaperone protein DnaK (638 aa).

Thr198 carries the phosphothreonine; by autocatalysis modification. Residues 603–618 (QQAQAQQAQGADADAQ) are compositionally biased toward low complexity. The interval 603–638 (QQAQAQQAQGADADAQQSKEDDVVDAEFEEVKDDKK) is disordered. Positions 624–638 (DVVDAEFEEVKDDKK) are enriched in acidic residues.

It belongs to the heat shock protein 70 family.

In terms of biological role, acts as a chaperone. In Vibrio campbellii (strain ATCC BAA-1116), this protein is Chaperone protein DnaK.